A 29-amino-acid chain; its full sequence is Trypsin inhibitor 5 (29 aa).

Disulfide bonds link Cys3/Cys20, Cys10/Cys22, and Cys16/Cys28.

It belongs to the protease inhibitor I7 (squash-type serine protease inhibitor) family.

Its subcellular location is the secreted. Strongly inhibits trypsin, weakly inhibits chymotrypsin. The polypeptide is Trypsin inhibitor 5 (Cyclanthera pedata (Achocha)).